A 1330-amino-acid polypeptide reads, in one-letter code: Kinectin (1330 aa).

Residues M1–S6 lie on the Cytoplasmic side of the membrane. The helical; Signal-anchor for type II membrane protein transmembrane segment at T7 to M29 threads the bilayer. The Lumenal segment spans residues K30–E1330. 2 disordered regions span residues P49–P81 and S108–A218. A phosphoserine mark is found at S75 and S77. Over residues E113–K122 the composition is skewed to basic residues. Residues P123–V135 show a composition bias toward basic and acidic residues. Residue T153 is modified to Phosphothreonine. At S156 the chain carries Phosphoserine. Over residues S161–K171 the composition is skewed to basic residues. 5 N-linked (GlcNAc...) asparagine glycosylation sites follow: N172, N435, N772, N904, and N1055. A compositionally biased stretch (basic and acidic residues) spans N172–E182. Residues H332–L1329 adopt a coiled-coil conformation. S1085 bears the Phosphoserine mark. An N-linked (GlcNAc...) asparagine glycan is attached at N1236. S1286 bears the Phosphoserine mark. N-linked (GlcNAc...) asparagine glycosylation occurs at N1302.

Belongs to the kinectin family. In terms of assembly, parallel homodimers formed between the membrane-bound and the cytosolic form, and also between 2 cytosolic forms. As to expression, expressed in male brain, heart, kidney, liver, lung, spleen and testis.

It is found in the endoplasmic reticulum membrane. Its function is as follows. Receptor for kinesin thus involved in kinesin-driven vesicle motility. The sequence is that of Kinectin (KTN1) from Vulpes vulpes (Red fox).